The primary structure comprises 127 residues: Ribonuclease P protein component 1 (127 aa).

It belongs to the eukaryotic/archaeal RNase P protein component 1 family. Consists of a catalytic RNA component and at least 4-5 protein subunits.

The protein localises to the cytoplasm. The enzyme catalyses Endonucleolytic cleavage of RNA, removing 5'-extranucleotides from tRNA precursor.. Part of ribonuclease P, a protein complex that generates mature tRNA molecules by cleaving their 5'-ends. The sequence is that of Ribonuclease P protein component 1 from Pyrococcus abyssi (strain GE5 / Orsay).